Consider the following 153-residue polypeptide: Cytochrome c-type biogenesis protein CcmE (153 aa).

The Cytoplasmic segment spans residues 1–7; it reads MKPRHKR. Residues 8 to 28 form a helical; Signal-anchor for type II membrane protein membrane-spanning segment; it reads LAIAGGVLVAVGAIATLVLNA. At 29–153 the chain is on the periplasmic side; the sequence is FQSNLVFFYS…SSQAATGDPR (125 aa). Residues His-120 and Tyr-124 each contribute to the heme site. The disordered stretch occupies residues 130–153; that stretch reads AEALKRAKEGGQMQSSQAATGDPR. The span at 141-153 shows a compositional bias: polar residues; it reads QMQSSQAATGDPR.

Belongs to the CcmE/CycJ family.

Its subcellular location is the cell inner membrane. Functionally, heme chaperone required for the biogenesis of c-type cytochromes. Transiently binds heme delivered by CcmC and transfers the heme to apo-cytochromes in a process facilitated by CcmF and CcmH. This Leptothrix cholodnii (strain ATCC 51168 / LMG 8142 / SP-6) (Leptothrix discophora (strain SP-6)) protein is Cytochrome c-type biogenesis protein CcmE.